The chain runs to 662 residues: Bifunctional polymyxin resistance protein ArnA (662 aa).

Positions 1-307 (MTSKAVVFAY…ELGLVEGARL (307 aa)) are formyltransferase ArnAFT. Histidine 106 (proton donor; for formyltransferase activity) is an active-site residue. (6R)-10-formyltetrahydrofolate contacts are provided by residues arginine 116 and 138–142 (IERAD). Residues 316–662 (RRTRVLILGV…EALREREAQA (347 aa)) form a dehydrogenase ArnADH region. NAD(+) contacts are provided by residues aspartate 349 and 370–371 (DI). Residues alanine 395, tyrosine 400, and 434 to 435 (TS) each bind UDP-alpha-D-glucuronate. Catalysis depends on glutamate 436, which acts as the Proton acceptor; for decarboxylase activity. UDP-alpha-D-glucuronate-binding positions include arginine 462, asparagine 493, 527-536 (RLVDGGAQKR), and tyrosine 614. Arginine 620 serves as the catalytic Proton donor; for decarboxylase activity.

This sequence in the N-terminal section; belongs to the Fmt family. UDP-L-Ara4N formyltransferase subfamily. In the C-terminal section; belongs to the NAD(P)-dependent epimerase/dehydratase family. UDP-glucuronic acid decarboxylase subfamily. Homohexamer, formed by a dimer of trimers.

It catalyses the reaction UDP-alpha-D-glucuronate + NAD(+) = UDP-beta-L-threo-pentopyranos-4-ulose + CO2 + NADH. The enzyme catalyses UDP-4-amino-4-deoxy-beta-L-arabinose + (6R)-10-formyltetrahydrofolate = UDP-4-deoxy-4-formamido-beta-L-arabinose + (6S)-5,6,7,8-tetrahydrofolate + H(+). It functions in the pathway nucleotide-sugar biosynthesis; UDP-4-deoxy-4-formamido-beta-L-arabinose biosynthesis; UDP-4-deoxy-4-formamido-beta-L-arabinose from UDP-alpha-D-glucuronate: step 1/3. It participates in nucleotide-sugar biosynthesis; UDP-4-deoxy-4-formamido-beta-L-arabinose biosynthesis; UDP-4-deoxy-4-formamido-beta-L-arabinose from UDP-alpha-D-glucuronate: step 3/3. The protein operates within bacterial outer membrane biogenesis; lipopolysaccharide biosynthesis. In terms of biological role, bifunctional enzyme that catalyzes the oxidative decarboxylation of UDP-glucuronic acid (UDP-GlcUA) to UDP-4-keto-arabinose (UDP-Ara4O) and the addition of a formyl group to UDP-4-amino-4-deoxy-L-arabinose (UDP-L-Ara4N) to form UDP-L-4-formamido-arabinose (UDP-L-Ara4FN). The modified arabinose is attached to lipid A and is required for resistance to polymyxin and cationic antimicrobial peptides. In Pseudomonas aeruginosa (strain LESB58), this protein is Bifunctional polymyxin resistance protein ArnA.